Consider the following 240-residue polypeptide: Large ribosomal subunit protein bL25 (240 aa).

2 disordered regions span residues 1 to 21 (MAENVLSAQKRTEQGKGPARR) and 204 to 240 (GAAPAAGAAAPAGGAAPAAGAAPAKGGEAKGGDKAKK). The span at 204–229 (GAAPAAGAAAPAGGAAPAAGAAPAKG) shows a compositional bias: low complexity. Residues 230-240 (GEAKGGDKAKK) are compositionally biased toward basic and acidic residues.

The protein belongs to the bacterial ribosomal protein bL25 family. CTC subfamily. Part of the 50S ribosomal subunit; part of the 5S rRNA/L5/L18/L25 subcomplex. Contacts the 5S rRNA. Binds to the 5S rRNA independently of L5 and L18.

In terms of biological role, this is one of the proteins that binds to the 5S RNA in the ribosome where it forms part of the central protuberance. In Anaeromyxobacter dehalogenans (strain 2CP-1 / ATCC BAA-258), this protein is Large ribosomal subunit protein bL25.